The primary structure comprises 100 residues: Integration host factor subunit alpha (100 aa).

Belongs to the bacterial histone-like protein family. As to quaternary structure, heterodimer of an alpha and a beta chain.

In terms of biological role, this protein is one of the two subunits of integration host factor, a specific DNA-binding protein that functions in genetic recombination as well as in transcriptional and translational control. This chain is Integration host factor subunit alpha, found in Ruegeria sp. (strain TM1040) (Silicibacter sp.).